The chain runs to 109 residues: Nucleoid-associated protein SO_2014 (109 aa).

It belongs to the YbaB/EbfC family. In terms of assembly, homodimer.

It localises to the cytoplasm. It is found in the nucleoid. Functionally, binds to DNA and alters its conformation. May be involved in regulation of gene expression, nucleoid organization and DNA protection. The sequence is that of Nucleoid-associated protein SO_2014 from Shewanella oneidensis (strain ATCC 700550 / JCM 31522 / CIP 106686 / LMG 19005 / NCIMB 14063 / MR-1).